The sequence spans 123 residues: MAFRAARIAFAWKATNPANTTIRQYIKETLEEAPEKISQTVKKATGKASKKIDENKDKSPQEMAENAKQSVKQTAKDAKDTDYQQKAKDAGKKIKEEFSQRSENVLEETRREGMNRDGGVKKE.

Residues 34–123 form a disordered region; it reads PEKISQTVKK…MNRDGGVKKE (90 aa). Composition is skewed to basic and acidic residues over residues 50 to 60, 74 to 100, and 107 to 123; these read KKIDENKDKSP, TAKD…EFSQ, and EETR…VKKE.

Its subcellular location is the mitochondrion. This is an uncharacterized protein from Schizosaccharomyces pombe (strain 972 / ATCC 24843) (Fission yeast).